The following is a 346-amino-acid chain: Probable alpha-1,2-galactosyltransferase gmh2 (346 aa).

The Cytoplasmic segment spans residues 1 to 11 (MALMLSRIPRR). A helical; Signal-anchor for type II membrane protein transmembrane segment spans residues 12 to 32 (FFFLFLTVGLIAGAFLYSLIY). The Lumenal segment spans residues 33–346 (FVDVDLVSKV…LWQKFYALID (314 aa)). 3 N-linked (GlcNAc...) asparagine glycosylation sites follow: N64, N142, and N224.

This sequence belongs to the glycosyltransferase 34 family.

The protein localises to the golgi apparatus membrane. The polypeptide is Probable alpha-1,2-galactosyltransferase gmh2 (gmh2) (Schizosaccharomyces pombe (strain 972 / ATCC 24843) (Fission yeast)).